An 859-amino-acid polypeptide reads, in one-letter code: DNA (cytosine-5)-methyltransferase 3B (859 aa).

The tract at residues methionine 1–tyrosine 305 is interaction with DNMT1 and DNMT3A. Residues glycine 25–aspartate 226 form a disordered region. Acidic residues predominate over residues aspartate 85 to asparagine 94. Position 96 is a phosphoserine (serine 96). Lysine 102 is covalently cross-linked (Glycyl lysine isopeptide (Lys-Gly) (interchain with G-Cter in SUMO2)). The segment covering leucine 103–serine 114 has biased composition (basic and acidic residues). Residue threonine 112 is modified to Phosphothreonine. Position 116 is a phosphoserine (serine 116). Low complexity predominate over residues serine 167 to serine 179. Residues lysine 189–leucine 198 are compositionally biased toward polar residues. Residues alanine 214–aspartate 226 are compositionally biased toward basic and acidic residues. Phosphoserine is present on serine 216. Residues isoleucine 232–phenylalanine 290 form the PWWP domain. The disordered stretch occupies residues lysine 348–valine 429. Composition is skewed to basic and acidic residues over residues arginine 370–arginine 381 and glycine 412–alanine 426. Arginine 415 is modified (citrulline). Positions glutamate 428–aspartate 560 constitute an ADD domain. Residues arginine 439–glutamate 469 form a GATA-type; atypical zinc finger. Residues cysteine 440 to cysteine 532 are interaction with the PRC2/EED-EZH2 complex. The segment at glutamine 480–arginine 536 adopts a PHD-type; atypical zinc-finger fold. The 279-residue stretch at isoleucine 581–glutamate 859 folds into the SAM-dependent MTase C5-type domain. S-adenosyl-L-methionine is bound by residues aspartate 588 to threonine 592 and glutamate 611. A Glycyl lysine isopeptide (Lys-Gly) (interchain with G-Cter in SUMO2) cross-link involves residue lysine 623. Aspartate 633–arginine 635 contacts S-adenosyl-L-methionine. Cysteine 657 is a catalytic residue. Arginine 838–tryptophan 840 is an S-adenosyl-L-methionine binding site.

It belongs to the class I-like SAM-binding methyltransferase superfamily. C5-methyltransferase family. Interacts with CBX4, DNMT1, DNMT3A, SETDB1, UBE2I9, UBL1 and ZHX1. Interacts with SUV39H1 and BAZ2A/TIP5. Interacts with the PRC2/EED-EZH2 complex. Interacts with UHRF1. Sumoylated. In terms of processing, citrullinated by PADI4.

Its subcellular location is the nucleus. The catalysed reaction is a 2'-deoxycytidine in DNA + S-adenosyl-L-methionine = a 5-methyl-2'-deoxycytidine in DNA + S-adenosyl-L-homocysteine + H(+). Activated by binding to the regulatory factor DNMT3L. Its function is as follows. Required for genome-wide de novo methylation and is essential for the establishment of DNA methylation patterns during development. DNA methylation is coordinated with methylation of histones. May preferentially methylates nucleosomal DNA within the nucleosome core region. May function as transcriptional co-repressor by associating with CBX4 and independently of DNA methylation. Seems to be involved in gene silencing. In association with DNMT1 and via the recruitment of CTCFL/BORIS, involved in activation of BAG1 gene expression by modulating dimethylation of promoter histone H3 at H3K4 and H3K9. Functions as a transcriptional corepressor by associating with ZHX1. Required for DUX4 silencing in somatic cells. The protein is DNA (cytosine-5)-methyltransferase 3B (Dnmt3b) of Mus musculus (Mouse).